The primary structure comprises 264 residues: MIEVSGLSVRLSGKSIISDVTFAAKAGELTAIAGPNGSGKTTTMKAISGELAYDGSVRIGGDEVKGLKPWQLAAVRGVLPQASTISFPFTVREIVRMGLTSGLNLHPDKSDQAAAAALASVDLVGFEGRFYQELSGGEQQRVQLARVLCQISEPIVDGKPCWLLLDEPVSSLDISHQLTIMTLARNFCKRGGGVIAVMHDLNLTALFADRVVLIKSGRLAAAGSIEEVLTDATMLSVFGCALRINQIPADGTPFVLAHSALSCP.

The 240-residue stretch at 2–241 folds into the ABC transporter domain; that stretch reads IEVSGLSVRL…ATMLSVFGCA (240 aa). An ATP-binding site is contributed by 34–41; sequence GPNGSGKT.

The protein belongs to the ABC transporter superfamily. Heme (hemin) importer (TC 3.A.1.14.5) family. In terms of assembly, the complex is composed of two ATP-binding proteins (HmuV), two transmembrane proteins (HmuU) and a solute-binding protein (HmuT).

Its subcellular location is the cell inner membrane. Functionally, part of the ABC transporter complex HmuTUV involved in hemin import. Responsible for energy coupling to the transport system. The sequence is that of Hemin import ATP-binding protein HmuV from Rhizobium etli (strain ATCC 51251 / DSM 11541 / JCM 21823 / NBRC 15573 / CFN 42).